The following is a 330-amino-acid chain: Protein-lysine N-methyltransferase EEF2KMT (330 aa).

M1 is subject to N-acetylmethionine. S-adenosyl-L-methionine contacts are provided by residues W139, 165–167 (GSG), W228, and A247.

It belongs to the class I-like SAM-binding methyltransferase superfamily. EEF2KMT family. Interacts with FAM86B2 and FAM86C1P.

It is found in the cytoplasm. The catalysed reaction is L-lysyl-[protein] + 3 S-adenosyl-L-methionine = N(6),N(6),N(6)-trimethyl-L-lysyl-[protein] + 3 S-adenosyl-L-homocysteine + 3 H(+). Its function is as follows. Catalyzes the trimethylation of eukaryotic elongation factor 2 (EEF2) on 'Lys-525'. The sequence is that of Protein-lysine N-methyltransferase EEF2KMT from Homo sapiens (Human).